The following is a 149-amino-acid chain: MSIDFPLGDDLAGYIAEAIAADPSFKGTLEDAEEARRLVDALIALRKHCQLSQVEVAKRMGVRQPTVSGFEKEPSDPKLSTLQRYARALDARLRLVLEVPTLREVPTWHRLSSYRGSARDHQVRVGADKEILMQTNWARHISVRQVEVA.

The HTH cro/C1-type domain occupies 42 to 96; the sequence is LIALRKHCQLSQVEVAKRMGVRQPTVSGFEKEPSDPKLSTLQRYARALDARLRLV. Residues 53-72 constitute a DNA-binding region (H-T-H motif); it reads QVEVAKRMGVRQPTVSGFEK.

In terms of assembly, interacts with SecB-like chaperone MT2006.

Its function is as follows. Antitoxin component of an atypical, type II toxin-antitoxin chaperone (TAC) system. Probably neutralizes the toxic effects of cognate toxin HigB1, which also requires SecB-like chaperone MT2006 (AC Q7D7P7). Autorepresses its operon (higB1-higA1-MT2006). This is Antitoxin HigA1 from Mycobacterium tuberculosis (strain CDC 1551 / Oshkosh).